Consider the following 71-residue polypeptide: Prophage lysis protein S homolog EssQ (71 aa).

Belongs to the lambda phage S protein family.

This is Prophage lysis protein S homolog EssQ (essQ) from Escherichia coli (strain K12).